A 437-amino-acid chain; its full sequence is Ribosomal protein uS12 methylthiotransferase RimO (437 aa).

The 111-residue stretch at 4 to 114 (PRIGFISLGC…VMNAVHEHLP (111 aa)) folds into the MTTase N-terminal domain. The [4Fe-4S] cluster site is built by C13, C49, C78, C145, C149, and C152. The region spanning 131-368 (LTPRHYAYLK…MEVQERISAA (238 aa)) is the Radical SAM core domain. In terms of domain architecture, TRAM spans 371-437 (RTRIGRTETV…AHDLWARLAD (67 aa)).

This sequence belongs to the methylthiotransferase family. RimO subfamily. [4Fe-4S] cluster is required as a cofactor.

It is found in the cytoplasm. The enzyme catalyses L-aspartate(89)-[ribosomal protein uS12]-hydrogen + (sulfur carrier)-SH + AH2 + 2 S-adenosyl-L-methionine = 3-methylsulfanyl-L-aspartate(89)-[ribosomal protein uS12]-hydrogen + (sulfur carrier)-H + 5'-deoxyadenosine + L-methionine + A + S-adenosyl-L-homocysteine + 2 H(+). In terms of biological role, catalyzes the methylthiolation of an aspartic acid residue of ribosomal protein uS12. The polypeptide is Ribosomal protein uS12 methylthiotransferase RimO (Methylococcus capsulatus (strain ATCC 33009 / NCIMB 11132 / Bath)).